Here is a 216-residue protein sequence, read N- to C-terminus: Adenylate kinase (216 aa).

10 to 15 (GSGKGT) is an ATP binding site. Residues 30–59 (STGDMLRAAVKEGTPMGVKAKAKMDAGALV) are NMP. AMP is bound by residues threonine 31, arginine 36, 57-59 (ALV), 85-88 (GFPR), and glutamine 92. Positions 126 to 163 (GRRTCRDCGKMYHVEFDAPAVADKCDKCGGQLFQRDDD) are LID. Arginine 127 is a binding site for ATP. Zn(2+) contacts are provided by cysteine 130, cysteine 133, cysteine 150, and cysteine 153. AMP is bound by residues arginine 160 and arginine 171. ATP is bound at residue lysine 199.

This sequence belongs to the adenylate kinase family. Monomer.

It is found in the cytoplasm. The catalysed reaction is AMP + ATP = 2 ADP. Its pathway is purine metabolism; AMP biosynthesis via salvage pathway; AMP from ADP: step 1/1. Catalyzes the reversible transfer of the terminal phosphate group between ATP and AMP. Plays an important role in cellular energy homeostasis and in adenine nucleotide metabolism. The chain is Adenylate kinase from Syntrophotalea carbinolica (strain DSM 2380 / NBRC 103641 / GraBd1) (Pelobacter carbinolicus).